Reading from the N-terminus, the 272-residue chain is Putative pyruvate, phosphate dikinase regulatory protein 1 (272 aa).

151 to 158 (GISRTSKT) contacts ADP.

This sequence belongs to the pyruvate, phosphate/water dikinase regulatory protein family. PDRP subfamily.

The catalysed reaction is N(tele)-phospho-L-histidyl/L-threonyl-[pyruvate, phosphate dikinase] + ADP = N(tele)-phospho-L-histidyl/O-phospho-L-threonyl-[pyruvate, phosphate dikinase] + AMP + H(+). The enzyme catalyses N(tele)-phospho-L-histidyl/O-phospho-L-threonyl-[pyruvate, phosphate dikinase] + phosphate + H(+) = N(tele)-phospho-L-histidyl/L-threonyl-[pyruvate, phosphate dikinase] + diphosphate. Functionally, bifunctional serine/threonine kinase and phosphorylase involved in the regulation of the pyruvate, phosphate dikinase (PPDK) by catalyzing its phosphorylation/dephosphorylation. The sequence is that of Putative pyruvate, phosphate dikinase regulatory protein 1 from Staphylococcus epidermidis (strain ATCC 35984 / DSM 28319 / BCRC 17069 / CCUG 31568 / BM 3577 / RP62A).